Consider the following 288-residue polypeptide: 4-hydroxybenzoate octaprenyltransferase (288 aa).

8 helical membrane-spanning segments follow: residues 23-43, 46-66, 98-118, 141-161, 165-185, 213-233, 234-254, and 268-288; these read IGSL…GKGI, TKIL…GCVV, ILFV…NSMT, LPQV…FAAV, LPLV…AYDT, LIIG…GWLM, NLGG…VHQQ, and AFLN…ISYL.

The protein belongs to the UbiA prenyltransferase family. It depends on Mg(2+) as a cofactor.

Its subcellular location is the cell inner membrane. The catalysed reaction is all-trans-octaprenyl diphosphate + 4-hydroxybenzoate = 4-hydroxy-3-(all-trans-octaprenyl)benzoate + diphosphate. Its pathway is cofactor biosynthesis; ubiquinone biosynthesis. In terms of biological role, catalyzes the prenylation of para-hydroxybenzoate (PHB) with an all-trans polyprenyl group. Mediates the second step in the final reaction sequence of ubiquinone-8 (UQ-8) biosynthesis, which is the condensation of the polyisoprenoid side chain with PHB, generating the first membrane-bound Q intermediate 3-octaprenyl-4-hydroxybenzoate. The chain is 4-hydroxybenzoate octaprenyltransferase from Yersinia enterocolitica serotype O:8 / biotype 1B (strain NCTC 13174 / 8081).